The chain runs to 61 residues: Overexpressed in colon carcinoma 1 protein homolog (61 aa).

A compositionally biased stretch (polar residues) spans Met-1–Pro-13. The segment at Met-1–Glu-61 is disordered. The segment covering Ser-18 to Arg-34 has biased composition (basic and acidic residues). The span at Thr-48–Glu-61 shows a compositional bias: polar residues.

The protein belongs to the OCC1 family.

This chain is Overexpressed in colon carcinoma 1 protein homolog (si:dkey-261e22.4), found in Danio rerio (Zebrafish).